Consider the following 125-residue polypeptide: uncharacterized protein (125 aa).

Residues 10–26 (IIILVCLMFLAIMVYIY) traverse the membrane as a helical segment.

The protein resides in the membrane. This is an uncharacterized protein from Rickettsia prowazekii (strain Madrid E).